The primary structure comprises 535 residues: T-complex protein 1 subunit epsilon (535 aa).

Belongs to the TCP-1 chaperonin family. As to quaternary structure, heterooligomeric complex of about 850 to 900 kDa that forms two stacked rings, 12 to 16 nm in diameter.

Its subcellular location is the cytoplasm. Functionally, molecular chaperone; assists the folding of proteins upon ATP hydrolysis. Known to play a role, in vitro, in the folding of actin and tubulin. This chain is T-complex protein 1 subunit epsilon, found in Avena sativa (Oat).